The sequence spans 418 residues: Hydroxysteroid dehydrogenase-like protein 2 (418 aa).

NADP(+)-binding positions include 17–23, Lys42, and Asp74; that span reads GASRGIG. Lys42 is subject to N6-(2-hydroxyisobutyryl)lysine. Lys116 carries the N6-acetyllysine modification. Residue Tyr168 is the Proton acceptor of the active site. Lys172 contributes to the NADP(+) binding site. Residues 306–415 enclose the SCP2 domain; sequence RSGAVEETFR…KLEKLMNQMN (110 aa). Lys318 carries the post-translational modification N6-succinyllysine.

Belongs to the short-chain dehydrogenases/reductases (SDR) family.

The protein resides in the peroxisome. It is found in the mitochondrion. In terms of biological role, has apparently no steroid dehydrogenase activity. Controls bile acid (BA) and lipid metabolism in response to nutritional cues. This chain is Hydroxysteroid dehydrogenase-like protein 2 (HSDL2), found in Bos taurus (Bovine).